A 233-amino-acid chain; its full sequence is Hydroxyacylglutathione hydrolase (233 aa).

Residues histidine 52, histidine 54, aspartate 56, histidine 57, histidine 108, aspartate 125, and histidine 163 each coordinate Zn(2+).

The protein belongs to the metallo-beta-lactamase superfamily. Glyoxalase II family. In terms of assembly, monomer. Zn(2+) is required as a cofactor.

The catalysed reaction is an S-(2-hydroxyacyl)glutathione + H2O = a 2-hydroxy carboxylate + glutathione + H(+). It functions in the pathway secondary metabolite metabolism; methylglyoxal degradation; (R)-lactate from methylglyoxal: step 2/2. Functionally, thiolesterase that catalyzes the hydrolysis of S-D-lactoyl-glutathione to form glutathione and D-lactic acid. This chain is Hydroxyacylglutathione hydrolase, found in Histophilus somni (strain 2336) (Haemophilus somnus).